The primary structure comprises 475 residues: U3 small nucleolar RNA-interacting protein 2 (475 aa).

Residues 1 to 75 are disordered; it reads MSATAAARKR…EEEEELEETA (75 aa). Positions 8–40 match the Nuclear localization signal motif; it reads RKRGKPASGAGAGAGAGKRRRKADSAGDRGKSK. Arginine 10 is subject to Omega-N-methylarginine. 2 positions are modified to N6-acetyllysine: lysine 12 and lysine 25. Phosphoserine is present on residues serine 50, serine 51, serine 53, and serine 57. The span at 65–74 shows a compositional bias: acidic residues; it reads EEEEEELEET. Lysine 113 is covalently cross-linked (Glycyl lysine isopeptide (Lys-Gly) (interchain with G-Cter in SUMO2)). 7 WD repeats span residues 144 to 183, 197 to 236, 239 to 278, 281 to 320, 322 to 360, 374 to 413, and 419 to 460; these read GHQL…KLHV, GHSS…HLYT, GHRD…YVET, GHQD…QLVF, GHQG…PLAL, EQPF…RQLD, and PLVG…NSVC.

The protein belongs to the WD repeat RRP9 family. As to quaternary structure, interacts specifically with the U3 small nucleolar RNA (U3 snoRNA). Binds a sub-fragment of the U3 snoRNA surrounding the B/C motif (3UBC). This association with the U3BC RNA is dependent on the binding of a protein called 15.5K to the box B/C motif. The association of the protein with the U3BC RNA was found to be also dependent on a conserved RNA structure that flanks the box B/C motif. Part of the small subunit (SSU) processome, composed of more than 70 proteins and the RNA chaperone small nucleolar RNA (snoRNA) U3. Acetylation at Lys-12 and Lys-25 by KAT2B/PCAF under stress impairs pre-rRNA processing. Deacetylation by SIRT7 enhances RRP9-binding to U3 snoRNA, which is a prerequisite for pre-rRNA processing.

The protein localises to the nucleus. Its subcellular location is the nucleolus. In terms of biological role, component of a nucleolar small nuclear ribonucleoprotein particle (snoRNP) thought to participate in the processing and modification of pre-ribosomal RNA (pre-rRNA). Part of the small subunit (SSU) processome, first precursor of the small eukaryotic ribosomal subunit. During the assembly of the SSU processome in the nucleolus, many ribosome biogenesis factors, an RNA chaperone and ribosomal proteins associate with the nascent pre-rRNA and work in concert to generate RNA folding, modifications, rearrangements and cleavage as well as targeted degradation of pre-ribosomal RNA by the RNA exosome. This chain is U3 small nucleolar RNA-interacting protein 2, found in Homo sapiens (Human).